A 246-amino-acid chain; its full sequence is Aliphatic sulfonates import ATP-binding protein SsuB 2 (246 aa).

In terms of domain architecture, ABC transporter spans 4 to 218 (VTVRGLRRAF…RRDPRFEQAR (215 aa)). Residue 36–43 (GRSGGGKT) participates in ATP binding.

Belongs to the ABC transporter superfamily. Aliphatic sulfonates importer (TC 3.A.1.17.2) family. The complex is composed of two ATP-binding proteins (SsuB), two transmembrane proteins (SsuC) and a solute-binding protein (SsuA).

It is found in the cell membrane. It catalyses the reaction ATP + H2O + aliphatic sulfonate-[sulfonate-binding protein]Side 1 = ADP + phosphate + aliphatic sulfonateSide 2 + [sulfonate-binding protein]Side 1.. Part of the ABC transporter complex SsuABC involved in aliphatic sulfonates import. Responsible for energy coupling to the transport system. This is Aliphatic sulfonates import ATP-binding protein SsuB 2 from Frankia alni (strain DSM 45986 / CECT 9034 / ACN14a).